Here is a 301-residue protein sequence, read N- to C-terminus: Probable 2-(5''-triphosphoribosyl)-3'-dephosphocoenzyme-A synthase (301 aa).

The protein belongs to the CitG/MdcB family.

The enzyme catalyses 3'-dephospho-CoA + ATP = 2'-(5''-triphospho-alpha-D-ribosyl)-3'-dephospho-CoA + adenine. In Pectobacterium carotovorum subsp. carotovorum (strain PC1), this protein is Probable 2-(5''-triphosphoribosyl)-3'-dephosphocoenzyme-A synthase.